A 597-amino-acid chain; its full sequence is Elongation factor 4 (597 aa).

The tr-type G domain maps to 2-184; the sequence is KNIRNFSIIA…EIVAKIPAPT (183 aa). GTP-binding positions include 14–19 and 131–134; these read DHGKST and NKID.

This sequence belongs to the TRAFAC class translation factor GTPase superfamily. Classic translation factor GTPase family. LepA subfamily.

Its subcellular location is the cell inner membrane. It catalyses the reaction GTP + H2O = GDP + phosphate + H(+). Required for accurate and efficient protein synthesis under certain stress conditions. May act as a fidelity factor of the translation reaction, by catalyzing a one-codon backward translocation of tRNAs on improperly translocated ribosomes. Back-translocation proceeds from a post-translocation (POST) complex to a pre-translocation (PRE) complex, thus giving elongation factor G a second chance to translocate the tRNAs correctly. Binds to ribosomes in a GTP-dependent manner. This Neisseria meningitidis serogroup B (strain ATCC BAA-335 / MC58) protein is Elongation factor 4.